The following is a 348-amino-acid chain: Glucose 1-dehydrogenase 2 (348 aa).

Cys-39 serves as a coordination point for Zn(2+). Substrate is bound at residue Thr-41. 2 residues coordinate Zn(2+): His-64 and Glu-65. Substrate-binding residues include Glu-110 and Glu-146. Glu-146 serves as a coordination point for Zn(2+). Residues 178 to 181 (AGPV), 260 to 262 (LGV), and 289 to 291 (SVN) each bind NADP(+). Asn-291 contributes to the substrate binding site.

The protein belongs to the zinc-containing alcohol dehydrogenase family. Glucose 1-dehydrogenase subfamily. Zn(2+) serves as cofactor.

The enzyme catalyses D-glucose + NAD(+) = D-glucono-1,5-lactone + NADH + H(+). The catalysed reaction is D-glucose + NADP(+) = D-glucono-1,5-lactone + NADPH + H(+). Functionally, catalyzes the NAD(P)(+)-dependent oxidation of D-glucose to D-gluconate via gluconolactone. Can utilize both NAD(+) and NADP(+) as electron acceptor. Is involved in the degradation of glucose through a non-phosphorylative variant of the Entner-Doudoroff pathway. The protein is Glucose 1-dehydrogenase 2 of Vulcanisaeta moutnovskia (strain 768-28).